The sequence spans 203 residues: Glutathione-specific gamma-glutamylcyclotransferase (203 aa).

Residue 12 to 17 (VFGYGS) participates in substrate binding. The active-site Proton acceptor is the Glu105.

The protein belongs to the gamma-glutamylcyclotransferase family. ChaC subfamily.

It localises to the cytoplasm. The protein localises to the nucleus. It catalyses the reaction glutathione = L-cysteinylglycine + 5-oxo-L-proline. Gamma-glutamylcyclotransferase acting specifically on glutathione, but not on other gamma-glutamyl peptides. Allows utilization of gluthathione through subsequent cleavage of the Cys-Gly dipeptide by Cys-Gly metallodipeptidase dug1. The chain is Glutathione-specific gamma-glutamylcyclotransferase from Schizosaccharomyces pombe (strain 972 / ATCC 24843) (Fission yeast).